Consider the following 312-residue polypeptide: MLNPNKIIKEGDRVVMYNGKDNMAVLTMESNNVYNSKFGSYRHKNIIGKEYGSKLSSDNGNGFCHVIAMTPELWSITLDHRTQILFNLDISTIIFNLELKNGSRAVESGTGSGSLSSSIARTIAPKGHLFTFEFHEERVKFARKDFKDNGLDQYITVTHRDACGKEGFLRQDINNDIDAVFLDLPSPWDAIENAIAVMHDGSMLCSFSPCIEQVQNTCLKLADSKFQEIKTIEVLIRTFDTRLQEYEELNLTNPYIDNNNNNNNNNNIEENRGKFEIGGIEGLKKDKLLSKPFTEARGHTGYLTFARYLPNA.

S-adenosyl-L-methionine-binding positions include Leu-85, 112 to 114 (SGS), Glu-133, Arg-138, 161 to 162 (DA), and Asp-183.

This sequence belongs to the class I-like SAM-binding methyltransferase superfamily. TRM61 family. In terms of assembly, heterotetramer; composed of two copies of trmt6 and two copies of trmt61a.

The protein resides in the nucleus. It catalyses the reaction adenosine(58) in tRNA + S-adenosyl-L-methionine = N(1)-methyladenosine(58) in tRNA + S-adenosyl-L-homocysteine + H(+). Inhibited by calcium and magnesium ions and spermidine. Enhanced by KCl, NaCl and NH(4)Cl in concentrations from 0.1-0.25 M. Concentrations of more than 0.3 M are inhibitory. Functionally, catalytic subunit of tRNA (adenine-N(1)-)-methyltransferase, which catalyzes the formation of N(1)-methyladenine at position 58 (m1A58) in initiator methionyl-tRNA. The sequence is that of tRNA (adenine(58)-N(1))-methyltransferase catalytic subunit trmt61a (trmt61a) from Dictyostelium discoideum (Social amoeba).